Consider the following 268-residue polypeptide: F-actin-capping protein subunit beta (268 aa).

It belongs to the F-actin-capping protein beta subunit family. As to quaternary structure, component of the F-actin capping complex, composed of a heterodimer of an alpha and a beta subunit.

The protein localises to the cytoplasm. It localises to the cytoskeleton. The protein resides in the actin patch. Its subcellular location is the nucleus. Its function is as follows. F-actin-capping proteins bind in a Ca(2+)-independent manner to the fast growing ends of actin filaments (barbed end) thereby blocking the exchange of subunits at these ends. Unlike other capping proteins (such as gelsolin and severin), these proteins do not sever actin filaments. Competes with formin cdc12 for attachment to the actin filaments barbed ends. Slowly replaces cdc12 on the barbed ends in preparation for filament disassembly during contractile ring constriction. In Schizosaccharomyces pombe (strain 972 / ATCC 24843) (Fission yeast), this protein is F-actin-capping protein subunit beta (acp2).